The chain runs to 828 residues: Periplasmic nitrate reductase (828 aa).

A signal peptide (tat-type signal) is located at residues 1-31; it reads MKLSRRGFMKANAVAAAAAAAGLSVPGVARA. A 4Fe-4S Mo/W bis-MGD-type domain is found at 39 to 95; that stretch reads IKWDKAPCRFCGTGCGVLVGTQQGRVVACQGDPDAPVNRGLNCIKGYFLPKIMYGED. Positions 46, 49, 53, and 81 each coordinate [4Fe-4S] cluster. Mo-bis(molybdopterin guanine dinucleotide) contacts are provided by residues lysine 83, glutamine 150, asparagine 175, cysteine 179, 212–219, 243–247, 262–264, methionine 372, glutamine 376, asparagine 482, 508–509, lysine 531, aspartate 558, and 718–727; these read WGANMAEM, STYQH, QSD, SD, and TGRVLEHWHT. Phenylalanine 794 lines the substrate pocket. The Mo-bis(molybdopterin guanine dinucleotide) site is built by asparagine 802 and lysine 819.

Belongs to the prokaryotic molybdopterin-containing oxidoreductase family. NasA/NapA/NarB subfamily. Component of the periplasmic nitrate reductase NapAB complex composed of NapA and NapB. [4Fe-4S] cluster serves as cofactor. Mo-bis(molybdopterin guanine dinucleotide) is required as a cofactor. In terms of processing, predicted to be exported by the Tat system. The position of the signal peptide cleavage has not been experimentally proven.

It is found in the periplasm. The catalysed reaction is 2 Fe(II)-[cytochrome] + nitrate + 2 H(+) = 2 Fe(III)-[cytochrome] + nitrite + H2O. In terms of biological role, catalytic subunit of the periplasmic nitrate reductase complex NapAB. Receives electrons from NapB and catalyzes the reduction of nitrate to nitrite. The chain is Periplasmic nitrate reductase from Shigella dysenteriae serotype 1 (strain Sd197).